The following is a 730-amino-acid chain: Denticleless protein homolog (730 aa).

Methionine 1 bears the N-acetylmethionine mark. WD repeat units follow at residues 47–89, 96–135, and 138–178; these read GVPV…FRKK, AHWN…LIGT, and GHQC…KDGF. A DDB1-binding motif motif is present at residues 168–171; the sequence is WDTR. The segment covering 188-198 has biased composition (polar residues); it reads AHNTSDKQTPS. The segment at 188-210 is disordered; that stretch reads AHNTSDKQTPSKPKKKQNSKGLA. Position 196 is a phosphothreonine (threonine 196). The short motif at 197–203 is the Nuclear localization signal element; that stretch reads PSKPKKK. 4 WD repeats span residues 214–253, 267–308, 313–354, and 358–398; these read DFQQ…TAYR, SSTR…TSPV, GHQN…QPPT, and GHSQ…EEKP. Residues 243–246 carry the DDB1-binding motif motif; the sequence is WDLR. Positions 399 to 443 are disordered; sequence GGDKLSTVGWASQKKKESRPGLVTVTSSQSTPAKAPRAKCNPSNS. Residues serine 410 and serine 426 each carry the phosphoserine modification. A Phosphothreonine; by CDK1 and CDK2 modification is found at threonine 464. The segment at 465 to 498 is disordered; sequence PTFSIKTSPAKARSPINRRGSVSSVSPKPPSSFK. Phosphoserine occurs at positions 485, 490, 495, and 512. Threonine 516 bears the Phosphothreonine mark. Serine 557 carries the phosphoserine modification. 2 disordered regions span residues 599 to 631 and 644 to 703; these read SKDS…YASE and GEGS…TITP. A phosphoserine mark is found at serine 676 and serine 679. The segment covering 679–689 has biased composition (polar residues); that stretch reads SPSSQTPNSRR. A phosphothreonine mark is found at threonine 684 and threonine 702. Serine 717 bears the Phosphoserine mark.

It belongs to the WD repeat cdt2 family. Component of the DCX(DTL) E3 ubiquitin ligase complex (also called CRL4(CDT2)), at least composed of CUL4 (CUL4A or CUL4B), DDB1, DTL/CDT2 and RBX1. Interacts with CDKN1A. Interacts with DDB1. Interacts with FBXO11; SCF(FBXWO11) controls DTL stability but DCX(DTL) does not control FBXO11 stability. Interacts with CRY1. Ubiquitinated by the anaphase promoting complex/cyclosome (APC/C). Autoubiquitinated through 'Lys-48'-polyubiquitin chains in a PCNA-independent reaction, allowing proteasomal turnover. Polyubiquitinated by SCF(FBXO11) when not phosphorylated, leading to its degradation. A tight regulation of the polyubiquitination by SCF(FBXO11) is involved in the control of different processes such as TGF-beta signaling, cell cycle progression and exit. Post-translationally, phosphorylated at Thr-464 by CDK1/Cyclin-B and CDK2/Cyclin-A but not by CDK2/Cyclin-E, MAPK1 or PLK1. Phosphorylation at Thr-464 inhibits the interaction with FBXO11 and decreases upon cell cycle exit induced by TGF-beta or serum starvation. As to expression, expressed in placenta and testis, very low expression seen in skeletal muscle. Detected in all hematopoietic tissues examined, with highest expression in thymus and bone marrow. A low level detected in the spleen and lymph node, and barely detectable level in the peripheral leukocytes. RA treatment down-regulated the expression in NT2 cell.

It is found in the nucleus. It localises to the nucleus membrane. The protein localises to the cytoplasm. Its subcellular location is the cytoskeleton. The protein resides in the microtubule organizing center. It is found in the centrosome. It localises to the chromosome. It functions in the pathway protein modification; protein ubiquitination. Functionally, substrate-specific adapter of a DCX (DDB1-CUL4-X-box) E3 ubiquitin-protein ligase complex required for cell cycle control, DNA damage response and translesion DNA synthesis. The DCX(DTL) complex, also named CRL4(CDT2) complex, mediates the polyubiquitination and subsequent degradation of CDT1, CDKN1A/p21(CIP1), FBH1, KMT5A and SDE2. CDT1 degradation in response to DNA damage is necessary to ensure proper cell cycle regulation of DNA replication. CDKN1A/p21(CIP1) degradation during S phase or following UV irradiation is essential to control replication licensing. KMT5A degradation is also important for a proper regulation of mechanisms such as TGF-beta signaling, cell cycle progression, DNA repair and cell migration. Most substrates require their interaction with PCNA for their polyubiquitination: substrates interact with PCNA via their PIP-box, and those containing the 'K+4' motif in the PIP box, recruit the DCX(DTL) complex, leading to their degradation. In undamaged proliferating cells, the DCX(DTL) complex also promotes the 'Lys-164' monoubiquitination of PCNA, thereby being involved in PCNA-dependent translesion DNA synthesis. The DDB1-CUL4A-DTL E3 ligase complex regulates the circadian clock function by mediating the ubiquitination and degradation of CRY1. The sequence is that of Denticleless protein homolog (DTL) from Homo sapiens (Human).